We begin with the raw amino-acid sequence, 137 residues long: Large-conductance mechanosensitive channel (137 aa).

2 consecutive transmembrane segments (helical) span residues valine 15–valine 35 and glycine 81–isoleucine 101.

It belongs to the MscL family. Homopentamer.

Its subcellular location is the cell inner membrane. In terms of biological role, channel that opens in response to stretch forces in the membrane lipid bilayer. May participate in the regulation of osmotic pressure changes within the cell. The chain is Large-conductance mechanosensitive channel from Hyphomonas neptunium (strain ATCC 15444).